The following is a 359-amino-acid chain: tRNA N6-adenosine threonylcarbamoyltransferase (359 aa).

Positions 115 and 119 each coordinate Fe cation. Residues 137–141 (LVSGG), Asp-170, Gly-183, and Asn-283 contribute to the substrate site. Position 311 (Asp-311) interacts with Fe cation. Residues 328–359 (APDSLDIAPRSRWPLDEKSAPVFGTGRRGAKA) form a disordered region.

Belongs to the KAE1 / TsaD family. Fe(2+) serves as cofactor.

Its subcellular location is the cytoplasm. It catalyses the reaction L-threonylcarbamoyladenylate + adenosine(37) in tRNA = N(6)-L-threonylcarbamoyladenosine(37) in tRNA + AMP + H(+). Functionally, required for the formation of a threonylcarbamoyl group on adenosine at position 37 (t(6)A37) in tRNAs that read codons beginning with adenine. Is involved in the transfer of the threonylcarbamoyl moiety of threonylcarbamoyl-AMP (TC-AMP) to the N6 group of A37, together with TsaE and TsaB. TsaD likely plays a direct catalytic role in this reaction. The chain is tRNA N6-adenosine threonylcarbamoyltransferase from Brucella canis (strain ATCC 23365 / NCTC 10854 / RM-666).